The chain runs to 119 residues: UPF0102 protein Pmen_0910 (119 aa).

The protein belongs to the UPF0102 family.

The polypeptide is UPF0102 protein Pmen_0910 (Ectopseudomonas mendocina (strain ymp) (Pseudomonas mendocina)).